Consider the following 28-residue polypeptide: Mu-theraphotoxin-Hsp1a (28 aa).

3 disulfides stabilise this stretch: Cys-2–Cys-16, Cys-9–Cys-21, and Cys-15–Cys-25. Asparagine amide is present on Asn-28.

This sequence belongs to the neurotoxin 30 (phrixotoxin) family. As to expression, expressed by the venom gland.

The protein localises to the secreted. Its function is as follows. Potent and selective inhibitor of Nav1.7/SCN9A sodium channels. Inhibits Nav1.7/SCN9A peak current (IC(50)=13 nM). In vivo, does not induce visible signs of toxicity when intravenously injected into mice. The sequence is that of Mu-theraphotoxin-Hsp1a from Homoeomma sp. (Peruvian tarantula).